Consider the following 124-residue polypeptide: V-type proton ATPase subunit F (124 aa).

This sequence belongs to the V-ATPase F subunit family. In terms of assembly, V-ATPase is a heteromultimeric enzyme composed of a peripheral catalytic V1 complex (components A to H) attached to an integral membrane V0 proton pore complex (components: a, c, c', c'', d, e, f and VOA1).

Its subcellular location is the vacuole membrane. Subunit of the V1 complex of vacuolar(H+)-ATPase (V-ATPase), a multisubunit enzyme composed of a peripheral complex (V1) that hydrolyzes ATP and a membrane integral complex (V0) that translocates protons. V-ATPase is responsible for acidifying and maintaining the pH of intracellular compartments. The polypeptide is V-type proton ATPase subunit F (vma-7) (Neurospora crassa (strain ATCC 24698 / 74-OR23-1A / CBS 708.71 / DSM 1257 / FGSC 987)).